A 374-amino-acid chain; its full sequence is Mannitol-1-phosphate 5-dehydrogenase (374 aa).

3–14 contacts NAD(+); it reads AIHFGAGNIGRG.

It belongs to the mannitol dehydrogenase family.

It carries out the reaction D-mannitol 1-phosphate + NAD(+) = beta-D-fructose 6-phosphate + NADH + H(+). The sequence is that of Mannitol-1-phosphate 5-dehydrogenase from Halalkalibacterium halodurans (strain ATCC BAA-125 / DSM 18197 / FERM 7344 / JCM 9153 / C-125) (Bacillus halodurans).